Reading from the N-terminus, the 109-residue chain is Cell division protein ZapA (109 aa).

Residues 21 to 100 (PDQRDALNQA…EQALLERGRI (80 aa)) adopt a coiled-coil conformation.

Belongs to the ZapA family. Type 1 subfamily. In terms of assembly, homodimer. Interacts with FtsZ.

It is found in the cytoplasm. Its function is as follows. Activator of cell division through the inhibition of FtsZ GTPase activity, therefore promoting FtsZ assembly into bundles of protofilaments necessary for the formation of the division Z ring. It is recruited early at mid-cell but it is not essential for cell division. The sequence is that of Cell division protein ZapA from Shigella dysenteriae serotype 1 (strain Sd197).